Here is a 103-residue protein sequence, read N- to C-terminus: Ig kappa-b4 chain C region (103 aa).

In terms of domain architecture, Ig-like spans 5–95 (PTVLIFPPAA…KVTQGTTSVV (91 aa)). Cys-26 and Cys-85 are disulfide-bonded.

The chain is Ig kappa-b4 chain C region from Oryctolagus cuniculus (Rabbit).